The sequence spans 169 residues: MSNPMRTPMVEKVIVHMGVGESGQHLVNAEEILKTITGQEVVRCFAKRTLPAFSIKKNEPIGCKVTLRGQRAQEFLGTSFEIIEKTLSRAQFDSLGNVSFGIEEHTDFPGMRYDPNIGVFGMDVTVVLKRPGERICKRRIATRKIPTDHRVTVDDAIAFLNESYGVEVM.

It belongs to the universal ribosomal protein uL5 family. As to quaternary structure, part of the 50S ribosomal subunit; contacts the 5S rRNA and probably tRNA. Forms a bridge to the 30S subunit in the 70S ribosome.

Functionally, this is one of the proteins that bind and probably mediate the attachment of the 5S RNA into the large ribosomal subunit, where it forms part of the central protuberance. In the 70S ribosome it contacts protein S13 of the 30S subunit (bridge B1b), connecting the 2 subunits; this bridge is implicated in subunit movement. May contact the P site tRNA; the 5S rRNA and some of its associated proteins might help stabilize positioning of ribosome-bound tRNAs. In Methanosarcina mazei (strain ATCC BAA-159 / DSM 3647 / Goe1 / Go1 / JCM 11833 / OCM 88) (Methanosarcina frisia), this protein is Large ribosomal subunit protein uL5.